The primary structure comprises 468 residues: Membrane-associated tyrosine- and threonine-specific cdc2-inhibitory kinase wee-1.1 (468 aa).

Basic and acidic residues predominate over residues 25 to 42 (SKDEPNKLNTSRKLEVTT). Positions 25 to 63 (SKDEPNKLNTSRKLEVTTKKNQSNNKKRPPPINKARKSL) are disordered. A compositionally biased stretch (basic residues) spans 49-61 (NKKRPPPINKARK). The 252-residue stretch at 106 to 357 (FNFDKNLGKG…SELMKNHVVK (252 aa)) folds into the Protein kinase domain. ATP is bound by residues 112-120 (LGKGSFGEV) and Lys-135. Residue Asp-224 is the Proton acceptor of the active site. Mg(2+) is bound by residues Asn-229 and Asp-242. Residues 425–453 (EDEYEVFSPPRTPVKKSRYQQTMPEVSPP) are disordered.

Belongs to the protein kinase superfamily. Ser/Thr protein kinase family. WEE1 subfamily. As to expression, in the 12-13-cell embryo, expressed in the E blastomere. In the 16-cell embryo, expressed in the eight AB cells.

The protein localises to the nucleus. The enzyme catalyses L-seryl-[protein] + ATP = O-phospho-L-seryl-[protein] + ADP + H(+). The catalysed reaction is L-threonyl-[protein] + ATP = O-phospho-L-threonyl-[protein] + ADP + H(+). Acts as a negative regulator of entry into mitosis (G2 to M transition) by phosphorylation of the CDK1 kinase. The chain is Membrane-associated tyrosine- and threonine-specific cdc2-inhibitory kinase wee-1.1 (wee-1.1) from Caenorhabditis elegans.